A 394-amino-acid chain; its full sequence is Probable fatty acyl-CoA transferase Rv3272 (394 aa).

Asp175 functions as the Nucleophile in the catalytic mechanism.

The protein belongs to the CoA-transferase III family. In terms of assembly, homodimer.

Probably involved in fatty acid metabolism. Binds to fatty acyl-CoAs of varying carbon chain lengths, with the highest binding affinity for palmitoyl-CoA (C16:0). In vitro, alters the cell wall lipid profile and protects mycobacteria from acidic, oxidative and antibiotic stress. May play a significant role in host-pathogen interaction. The polypeptide is Probable fatty acyl-CoA transferase Rv3272 (Mycobacterium tuberculosis (strain ATCC 25618 / H37Rv)).